The primary structure comprises 430 residues: tRNA(Ile)-lysidine synthase (430 aa).

Serine 24–serine 29 lines the ATP pocket.

It belongs to the tRNA(Ile)-lysidine synthase family.

Its subcellular location is the cytoplasm. It catalyses the reaction cytidine(34) in tRNA(Ile2) + L-lysine + ATP = lysidine(34) in tRNA(Ile2) + AMP + diphosphate + H(+). Its function is as follows. Ligates lysine onto the cytidine present at position 34 of the AUA codon-specific tRNA(Ile) that contains the anticodon CAU, in an ATP-dependent manner. Cytidine is converted to lysidine, thus changing the amino acid specificity of the tRNA from methionine to isoleucine. This is tRNA(Ile)-lysidine synthase from Haemophilus influenzae (strain ATCC 51907 / DSM 11121 / KW20 / Rd).